The following is a 161-amino-acid chain: Interleukin-17F (161 aa).

Positions 1–28 (MKGSCETTMVKSLLLLMLGFAIISSGAA) are cleaved as a signal peptide. A glycan (N-linked (GlcNAc...) asparagine) is linked at asparagine 83. Disulfide bonds link cysteine 100-cysteine 150 and cysteine 105-cysteine 152.

The protein belongs to the IL-17 family. In terms of assembly, homodimer; disulfide-linked. Heterodimer with IL17A (IL17A-IL17F). Forms complexes with IL17RA and IL17RC receptors with 2:1 binding stoichiometry: two receptor chains for one interleukin molecule. IL17F homodimer forms predominantly complexes with IL17RC homodimer, whereas IL17A-IL17F favors complexes with IL17RA-IL17RC. IL17RA and IL17RC chains cannot distinguish between IL17A and IL17F molecules, potentially enabling the formation of topologically distinct complexes.

The protein resides in the secreted. Its function is as follows. Effector cytokine of innate and adaptive immune system involved in antimicrobial host defense and maintenance of tissue integrity. IL17A-IL17F signals via IL17RA-IL17RC heterodimeric receptor complex, triggering homotypic interaction of IL17RA and IL17RC chains with TRAF3IP2 adapter through SEFIR domains. This leads to downstream TRAF6-mediated activation of NF-kappa-B and MAPkinase pathways ultimately resulting in transcriptional activation of cytokines, chemokines, antimicrobial peptides and matrix metalloproteinases, with potential strong immune inflammation. IL17A-IL17F is primarily involved in host defense against extracellular bacteria and fungi by inducing neutrophilic inflammation. As signature effector cytokine of T-helper 17 cells (Th17), primarily induces neutrophil activation and recruitment at infection and inflammatory sites. Stimulates the production of antimicrobial beta-defensins DEFB1, DEFB103A, and DEFB104A by mucosal epithelial cells, limiting the entry of microbes through the epithelial barriers. IL17F homodimer can signal via IL17RC homodimeric receptor complex, triggering downstream activation of TRAF6 and NF-kappa-B signaling pathway. Via IL17RC induces transcriptional activation of IL33, a potent cytokine that stimulates group 2 innate lymphoid cells and adaptive T-helper 2 cells involved in pulmonary allergic response to fungi. Likely via IL17RC, promotes sympathetic innervation of peripheral organs by coordinating the communication between gamma-delta T cells and parenchymal cells. Stimulates sympathetic innervation of thermogenic adipose tissue by driving TGFB1 expression. Regulates the composition of intestinal microbiota and immune tolerance by inducing antimicrobial proteins that specifically control the growth of commensal Firmicutes and Bacteroidetes. The chain is Interleukin-17F (Il17f) from Rattus norvegicus (Rat).